The primary structure comprises 388 residues: Xylose isomerase (388 aa).

Residues His54 and Asp57 contribute to the active site. Glu181, Glu217, His220, Asp245, Asp255, Asp257, and Asp287 together coordinate Mg(2+).

Belongs to the xylose isomerase family. As to quaternary structure, homotetramer. Mg(2+) serves as cofactor.

Its subcellular location is the cytoplasm. It carries out the reaction alpha-D-xylose = alpha-D-xylulofuranose. This is Xylose isomerase from Streptomyces avermitilis (strain ATCC 31267 / DSM 46492 / JCM 5070 / NBRC 14893 / NCIMB 12804 / NRRL 8165 / MA-4680).